Reading from the N-terminus, the 284-residue chain is MNWTGLYTLLSGVNRHSTAIGRVWLSVIFIFRIMVLVVAAESVWGDEKSSFICNTLQPGCNSVCYDHFFPISHVRLWSLQLILVSTPALLVAMHVAHQQHIEKKMLRLEGHGDPLHLEEVKRHKVHISGTLWWTYVISVVFRLLFEAAFMYVFYLLYPGYAMVRLVKCDAYPCPNTVDCFVSRPTEKTIFTVFMLAASGICIILNVAEVVYLIFRACARRAQRRSNPPSRKGSGGFGHRLSPEYKQNEINKLLSEQDGSLKDILRRSPGTGAGLAEKSDRCSAC.

The Cytoplasmic portion of the chain corresponds to 1–22 (MNWTGLYTLLSGVNRHSTAIGR). Residues 23 to 45 (VWLSVIFIFRIMVLVVAAESVWG) traverse the membrane as a helical segment. At 46–75 (DEKSSFICNTLQPGCNSVCYDHFFPISHVR) the chain is on the extracellular side. The helical transmembrane segment at 76-95 (LWSLQLILVSTPALLVAMHV) threads the bilayer. Over 96-130 (AHQQHIEKKMLRLEGHGDPLHLEEVKRHKVHISGT) the chain is Cytoplasmic. The helical transmembrane segment at 131-153 (LWWTYVISVVFRLLFEAAFMYVF) threads the bilayer. Residues 154-191 (YLLYPGYAMVRLVKCDAYPCPNTVDCFVSRPTEKTIFT) lie on the Extracellular side of the membrane. The chain crosses the membrane as a helical span at residues 192-214 (VFMLAASGICIILNVAEVVYLIF). Topologically, residues 215–284 (RACARRAQRR…AEKSDRCSAC (70 aa)) are cytoplasmic. Residues Ser233, Ser259, Ser267, and Ser278 each carry the phosphoserine modification.

The protein belongs to the connexin family. Beta-type (group I) subfamily. A connexon is composed of a hexamer of connexins. Interacts with CNST.

It is found in the cell membrane. Its subcellular location is the cell junction. The protein localises to the gap junction. In terms of biological role, one gap junction consists of a cluster of closely packed pairs of transmembrane channels, the connexons, through which materials of low MW diffuse from one cell to a neighboring cell. This Bos taurus (Bovine) protein is Gap junction beta-1 protein (GJB1).